Reading from the N-terminus, the 414-residue chain is MLDKIGIPKRLAWGFLGVVLFMMGDGLEQGWLSPFLIENGLTVQQSASIFSIYGIALAIASWFSGVCLEAFGAKRTMFMGLLFYVIGTAAFIVFGFEQLNLPVMYVTYFVKGLGYPLFAYSFLTWVIYRTPQSKLSTAVGWFWIAYCLGMFVFGAWYSSYAIKAFGYLNTLWSSIFWVCLGAFFALFINKDRFEKKKRKRSETAEELLKGVTILFTNPRVLTGGIIRIINSIGTYGFPVFLPMHMAQHGISTNVWLQIWGTIFLGNIVFNLIFGIVGDKFGWKNTVIWFGGVGCGIFTVLLYYAPVFSGGSLAVVSVIGFIWGGLLAGYVPIGAIVPTVAGKDKGAAMSVLNLAAGLSAFVGPALAWLFIGLVGAQGVVWIFAALYLASAVLTKCIHIPEEKAVKEETSPQYAS.

Residues 1 to 11 are Cytoplasmic-facing; that stretch reads MLDKIGIPKRL. A helical membrane pass occupies residues 12–32; it reads AWGFLGVVLFMMGDGLEQGWL. The Extracellular segment spans residues 33-47; it reads SPFLIENGLTVQQSA. A helical transmembrane segment spans residues 48 to 68; it reads SIFSIYGIALAIASWFSGVCL. The Cytoplasmic portion of the chain corresponds to 69–75; that stretch reads EAFGAKR. The chain crosses the membrane as a helical span at residues 76-96; it reads TMFMGLLFYVIGTAAFIVFGF. The Extracellular segment spans residues 97–107; sequence EQLNLPVMYVT. The chain crosses the membrane as a helical span at residues 108-128; that stretch reads YFVKGLGYPLFAYSFLTWVIY. The Cytoplasmic portion of the chain corresponds to 129-136; that stretch reads RTPQSKLS. Residues 137–157 traverse the membrane as a helical segment; sequence TAVGWFWIAYCLGMFVFGAWY. Residues 158–167 are Extracellular-facing; that stretch reads SSYAIKAFGY. The helical transmembrane segment at 168–188 threads the bilayer; sequence LNTLWSSIFWVCLGAFFALFI. Residues 189–219 lie on the Cytoplasmic side of the membrane; the sequence is NKDRFEKKKRKRSETAEELLKGVTILFTNPR. A helical transmembrane segment spans residues 220 to 240; sequence VLTGGIIRIINSIGTYGFPVF. Topologically, residues 241-255 are extracellular; it reads LPMHMAQHGISTNVW. The chain crosses the membrane as a helical span at residues 256 to 276; that stretch reads LQIWGTIFLGNIVFNLIFGIV. Over 277–286 the chain is Cytoplasmic; it reads GDKFGWKNTV. The helical transmembrane segment at 287 to 307 threads the bilayer; sequence IWFGGVGCGIFTVLLYYAPVF. Over 308–316 the chain is Extracellular; sequence SGGSLAVVS. The chain crosses the membrane as a helical span at residues 317-337; it reads VIGFIWGGLLAGYVPIGAIVP. The Cytoplasmic segment spans residues 338-343; it reads TVAGKD. The helical transmembrane segment at 344–364 threads the bilayer; it reads KGAAMSVLNLAAGLSAFVGPA. The Extracellular portion of the chain corresponds to 365–375; that stretch reads LAWLFIGLVGA. The helical transmembrane segment at 376 to 398 threads the bilayer; the sequence is QGVVWIFAALYLASAVLTKCIHI. Over 399–414 the chain is Cytoplasmic; it reads PEEKAVKEETSPQYAS.

This sequence belongs to the major facilitator superfamily. Sugar transporter (TC 2.A.1.1) family. CsbX subfamily.

The protein resides in the cell membrane. This is Putative transporter YoaB (yoaB) from Bacillus subtilis (strain 168).